The sequence spans 186 residues: Probable calcium-binding protein CML25 (186 aa).

A compositionally biased stretch (low complexity) spans 1–17 (MFNKNQGSNGGSSSNVG). The tract at residues 1–23 (MFNKNQGSNGGSSSNVGIGADSP) is disordered. 4 EF-hand domains span residues 33 to 68 (TEIR…LGHE), 69 to 104 (VPEE…GMDQ), 106 to 141 (DVLE…LGDE), and 142 to 177 (CSIA…GSRR). Ca(2+)-binding residues include D46, N48, D50, K52, and E57. D119, D121, N123, S125, E130, D155, D157, D159, T161, and E166 together coordinate Ca(2+).

Functionally, potential calcium sensor. The sequence is that of Probable calcium-binding protein CML25 (CML25) from Arabidopsis thaliana (Mouse-ear cress).